We begin with the raw amino-acid sequence, 417 residues long: Bifunctional thiamine biosynthesis protein ThiDN (417 aa).

The segment at 1-235 (MVILAIGGYD…KSKFGYNSNP (235 aa)) is hydroxymethylpyrimidine/phosphomethylpyrimidine kinase. Glutamine 41 is a binding site for 4-amino-5-hydroxymethyl-2-methylpyrimidine. Residues 236–417 (TYINKEKVIK…VIQKIYNTLM (182 aa)) are thiamine-phosphate synthase.

The protein in the N-terminal section; belongs to the ThiD family. In the C-terminal section; belongs to the ThiN family.

It catalyses the reaction 4-amino-5-hydroxymethyl-2-methylpyrimidine + ATP = 4-amino-2-methyl-5-(phosphooxymethyl)pyrimidine + ADP + H(+). The enzyme catalyses 4-amino-2-methyl-5-(phosphooxymethyl)pyrimidine + ATP = 4-amino-2-methyl-5-(diphosphooxymethyl)pyrimidine + ADP. It carries out the reaction 2-[(2R,5Z)-2-carboxy-4-methylthiazol-5(2H)-ylidene]ethyl phosphate + 4-amino-2-methyl-5-(diphosphooxymethyl)pyrimidine + 2 H(+) = thiamine phosphate + CO2 + diphosphate. The catalysed reaction is 2-(2-carboxy-4-methylthiazol-5-yl)ethyl phosphate + 4-amino-2-methyl-5-(diphosphooxymethyl)pyrimidine + 2 H(+) = thiamine phosphate + CO2 + diphosphate. It catalyses the reaction 4-methyl-5-(2-phosphooxyethyl)-thiazole + 4-amino-2-methyl-5-(diphosphooxymethyl)pyrimidine + H(+) = thiamine phosphate + diphosphate. It functions in the pathway cofactor biosynthesis; thiamine diphosphate biosynthesis; 4-amino-2-methyl-5-diphosphomethylpyrimidine from 5-amino-1-(5-phospho-D-ribosyl)imidazole. It participates in cofactor biosynthesis; thiamine diphosphate biosynthesis; thiamine phosphate from 4-amino-2-methyl-5-diphosphomethylpyrimidine and 4-methyl-5-(2-phosphoethyl)-thiazole: step 1/1. Its function is as follows. Catalyzes the phosphorylation of hydroxymethylpyrimidine phosphate (HMP-P) to HMP-PP, and of HMP to HMP-P. Functionally, condenses 4-methyl-5-(beta-hydroxyethyl)thiazole monophosphate (THZ-P) and 4-amino-5-hydroxymethyl pyrimidine pyrophosphate (HMP-PP) to form thiamine monophosphate (TMP). This is Bifunctional thiamine biosynthesis protein ThiDN (thiDN) from Methanocaldococcus jannaschii (strain ATCC 43067 / DSM 2661 / JAL-1 / JCM 10045 / NBRC 100440) (Methanococcus jannaschii).